A 453-amino-acid polypeptide reads, in one-letter code: Serine incorporator 1 (453 aa).

Gly-2 carries the N-myristoyl glycine lipid modification. Over 2-39 (GSVLGLCSMASWIPCLCGSAPCLLCRCCPSGNNSTVTR) the chain is Cytoplasmic. Residues 40 to 60 (LIYALFLLVGVCVACVMLIPG) form a helical membrane-spanning segment. Topologically, residues 61 to 88 (MEEQLNKIPGFCENEKGMVPCNILVGYK) are lumenal. A helical transmembrane segment spans residues 89 to 109 (AVYRLCFGLAMFYLLLSLLMI). Over 110 to 123 (KVKSSSDPRAAIHN) the chain is Cytoplasmic. Residues 124–144 (GFWFFKFAAAIAIIIGAFFIP) form a helical membrane-spanning segment. Topologically, residues 145 to 151 (EGTFTTV) are lumenal. Residues 152–172 (WFYVGMAGAFCFILIQLVLLI) traverse the membrane as a helical segment. The Cytoplasmic portion of the chain corresponds to 173–197 (DFAHSWNESWVEKMEEGNSRCWYAA). Residues 198-218 (LLSATALNYLLSLVAVVLFFV) traverse the membrane as a helical segment. The Lumenal segment spans residues 219–231 (YYTHPASCAENKA). Residues 232–252 (FISVNMLLCLGASIMSILPKI) form a helical membrane-spanning segment. At 253 to 259 (QESQPRS) the chain is on the cytoplasmic side. A helical transmembrane segment spans residues 260–280 (GLLQSSVITVYTMYLTWSAMT). At 281 to 309 (NEPETECNPSLLNIIGYNTTSTVSKEGQS) the chain is on the lumenal side. Residues 310 to 330 (VQWWHTQGIIGLILFLLCVFY) traverse the membrane as a helical segment. Residues 331–387 (SSIRTSNNSQVNKLTLTSDESTLIEDGGARNDGSLEDGDDVHRAVDNERDGVTYSYS) lie on the Cytoplasmic side of the membrane. Ser-351 is subject to Phosphoserine. Thr-352 carries the phosphothreonine modification. Ser-364 is subject to Phosphoserine. The chain crosses the membrane as a helical span at residues 388–408 (FFHFMLFLASLYIMMTLTNWY). Residues 409-426 (RYEPSREMKSQWTAVWVK) lie on the Lumenal side of the membrane. The chain crosses the membrane as a helical span at residues 427 to 447 (ISSSWIGIVLYVWTLVAPLVL). Residues 448 to 453 (TNRDFD) lie on the Cytoplasmic side of the membrane.

Belongs to the TDE1 family. In terms of assembly, interacts with SPTLC1.

The protein resides in the endoplasmic reticulum membrane. Enhances the incorporation of serine into phosphatidylserine and sphingolipids. In Bos taurus (Bovine), this protein is Serine incorporator 1 (SERINC1).